Reading from the N-terminus, the 309-residue chain is Mitochondrial brown fat uncoupling protein 1 (309 aa).

Topologically, residues methionine 1–proline 10 are mitochondrial intermembrane. Residues proline 11–phenylalanine 32 form a helical membrane-spanning segment. 3 Solcar repeats span residues proline 11–tryptophan 104, alanine 113–alanine 203, and aspartate 212–glutamate 297. The Mitochondrial matrix portion of the chain corresponds to proline 33 to lysine 75. Arginine 58 serves as a coordination point for fatty acid 16:0. A helical transmembrane segment spans residues leucine 76–tyrosine 98. At aspartate 99 to arginine 118 the chain is on the mitochondrial intermembrane side. The helical transmembrane segment at isoleucine 119–proline 135 threads the bilayer. Topologically, residues threonine 136–threonine 180 are mitochondrial matrix. The helical transmembrane segment at proline 181–tyrosine 197 threads the bilayer. At aspartate 198–leucine 214 the chain is on the mitochondrial intermembrane side. A helical membrane pass occupies residues proline 215–proline 234. Residues valine 235 to alanine 268 are Mitochondrial matrix-facing. A Cysteine sulfenic acid (-SOH) modification is found at cysteine 256. The chain crosses the membrane as a helical span at residues phenylalanine 269–phenylalanine 291. Lysine 271 is a binding site for fatty acid 16:0. The Mitochondrial intermembrane segment spans residues glutamate 292–threonine 309.

It belongs to the mitochondrial carrier (TC 2.A.29) family. As to quaternary structure, most probably functions as a monomer. Binds one purine nucleotide per monomer. However, has also been suggested to function as a homodimer or a homotetramer. Tightly associates with cardiolipin in the mitochondrion inner membrane; may stabilize and regulate its activity. Post-translationally, may undergo sulfenylation upon cold exposure. May increase the sensitivity of UCP1 thermogenic function to the activation by noradrenaline probably through structural effects. In terms of processing, may undergo ubiquitin-mediated proteasomal degradation.

It is found in the mitochondrion inner membrane. The enzyme catalyses H(+)(in) = H(+)(out). Has no constitutive proton transporter activity and has to be activated by long-chain fatty acids/LCFAs. Inhibited by purine nucleotides. Both purine nucleotides and LCFAs bind the cytosolic side of the transporter and directly compete to activate or inhibit it. Activated by noradrenaline and reactive oxygen species. Despite lacking canonical translational encoding for selenocysteine, a small pool of the protein has been observed to selectively incorporate selenocysteine at 'Cys-256'. Selenocysteine-modified protein is highly sensitive to redox modification and may constitute a pool of protein highly sensitive to activation by elevated levels of reactive oxygen species (ROS). Its function is as follows. Mitochondrial protein responsible for thermogenic respiration, a specialized capacity of brown adipose tissue and beige fat that participates in non-shivering adaptive thermogenesis to temperature and diet variations and more generally to the regulation of energy balance. Functions as a long-chain fatty acid/LCFA and proton symporter, simultaneously transporting one LCFA and one proton through the inner mitochondrial membrane. However, LCFAs remaining associated with the transporter via their hydrophobic tails, it results in an apparent transport of protons activated by LCFAs. Thereby, dissipates the mitochondrial proton gradient and converts the energy of substrate oxydation into heat instead of ATP. Regulates the production of reactive oxygen species/ROS by mitochondria. The protein is Mitochondrial brown fat uncoupling protein 1 of Canis lupus familiaris (Dog).